The chain runs to 197 residues: Peptide deformylase (197 aa).

Fe cation contacts are provided by Cys106 and His148. Glu149 is a catalytic residue. His152 serves as a coordination point for Fe cation.

This sequence belongs to the polypeptide deformylase family. Fe(2+) is required as a cofactor.

The enzyme catalyses N-terminal N-formyl-L-methionyl-[peptide] + H2O = N-terminal L-methionyl-[peptide] + formate. In terms of biological role, removes the formyl group from the N-terminal Met of newly synthesized proteins. Requires at least a dipeptide for an efficient rate of reaction. N-terminal L-methionine is a prerequisite for activity but the enzyme has broad specificity at other positions. The chain is Peptide deformylase from Mycobacterium leprae (strain TN).